A 142-amino-acid chain; its full sequence is Peptide methionine sulfoxide reductase MsrB (142 aa).

A MsrB domain is found at 2–125; it reads LKKDKSELTD…NSAAIQFIPY (124 aa). Cys114 acts as the Nucleophile in catalysis.

It belongs to the MsrB Met sulfoxide reductase family.

The enzyme catalyses L-methionyl-[protein] + [thioredoxin]-disulfide + H2O = L-methionyl-(R)-S-oxide-[protein] + [thioredoxin]-dithiol. The polypeptide is Peptide methionine sulfoxide reductase MsrB (Staphylococcus aureus (strain Mu3 / ATCC 700698)).